The following is a 156-amino-acid chain: SPbeta prophage-derived uncharacterized protein YorH (156 aa).

In Bacillus subtilis (strain 168), this protein is SPbeta prophage-derived uncharacterized protein YorH (yorH).